Reading from the N-terminus, the 147-residue chain is Large ribosomal subunit protein uL13 (147 aa).

Belongs to the universal ribosomal protein uL13 family. Part of the 50S ribosomal subunit.

This protein is one of the early assembly proteins of the 50S ribosomal subunit, although it is not seen to bind rRNA by itself. It is important during the early stages of 50S assembly. This Ligilactobacillus salivarius (strain UCC118) (Lactobacillus salivarius) protein is Large ribosomal subunit protein uL13.